Consider the following 505-residue polypeptide: Aminoaldehyde dehydrogenase 1a (505 aa).

D101 serves as a coordination point for Na(+). NAD(+) is bound by residues T161 to W163 and K187 to E190. Na(+) is bound at residue L191. NAD(+) contacts are provided by residues S241–T244 and E262. The Proton acceptor role is filled by E262. C296 functions as the Nucleophile in the catalytic mechanism. Residues E395 and W461 each coordinate NAD(+).

Belongs to the aldehyde dehydrogenase family. In terms of assembly, forms homodimers.

It carries out the reaction 4-aminobutanal + NAD(+) + H2O = 4-aminobutanoate + NADH + 2 H(+). It catalyses the reaction 3-aminopropanal + NAD(+) + H2O = beta-alanine + NADH + 2 H(+). The enzyme catalyses 4-(trimethylamino)butanal + NAD(+) + H2O = 4-(trimethylamino)butanoate + NADH + 2 H(+). The catalysed reaction is 4-guanidinobutanal + NAD(+) + H2O = 4-guanidinobutanoate + NADH + 2 H(+). It carries out the reaction betaine aldehyde + NAD(+) + H2O = glycine betaine + NADH + 2 H(+). It participates in amine and polyamine biosynthesis; betaine biosynthesis via choline pathway; betaine from betaine aldehyde: step 1/1. Its function is as follows. Dehydrogenase that catalyzes the oxidation of several aminoaldehydes. Metabolizes and detoxifies aldehyde products of polyamine degradation to non-toxic amino acids. Catalyzes the oxidation of 4-aminobutanal and 3-aminopropanal to 4-aminobutanoate and beta-alanine, respectively. Catalyzes the oxidation of 4-(trimethylamino)butanal and 4-guanidinobutanal to 4-trimethylammoniobutanoate and 4-guanidinobutanoate, respectively. Catalyzes the oxidation of betaine aldehyde to glycine betaine. In terms of biological role, dehydrogenase that catalyzes the oxidation of several aminoaldehydes. Catalyzes the oxidation of betaine aldehyde to glycine betaine. Catalyzes the oxidation of 4-(trimethylamino)butanal to 4-trimethylammoniobutanoate. The chain is Aminoaldehyde dehydrogenase 1a from Zea mays (Maize).